The primary structure comprises 151 residues: uncharacterized protein (151 aa).

The tract at residues 123-151 (PAGQNAGTGPAQKLKTDETRCYERRGGSQ) is disordered. Positions 136-151 (LKTDETRCYERRGGSQ) are enriched in basic and acidic residues.

This is an uncharacterized protein from Triticum aestivum (Wheat).